Reading from the N-terminus, the 475-residue chain is Aspartyl/glutamyl-tRNA(Asn/Gln) amidotransferase subunit B (475 aa).

Belongs to the GatB/GatE family. GatB subfamily. In terms of assembly, heterotrimer of A, B and C subunits.

The catalysed reaction is L-glutamyl-tRNA(Gln) + L-glutamine + ATP + H2O = L-glutaminyl-tRNA(Gln) + L-glutamate + ADP + phosphate + H(+). It catalyses the reaction L-aspartyl-tRNA(Asn) + L-glutamine + ATP + H2O = L-asparaginyl-tRNA(Asn) + L-glutamate + ADP + phosphate + 2 H(+). Allows the formation of correctly charged Asn-tRNA(Asn) or Gln-tRNA(Gln) through the transamidation of misacylated Asp-tRNA(Asn) or Glu-tRNA(Gln) in organisms which lack either or both of asparaginyl-tRNA or glutaminyl-tRNA synthetases. The reaction takes place in the presence of glutamine and ATP through an activated phospho-Asp-tRNA(Asn) or phospho-Glu-tRNA(Gln). In Staphylococcus aureus (strain COL), this protein is Aspartyl/glutamyl-tRNA(Asn/Gln) amidotransferase subunit B.